Here is a 715-residue protein sequence, read N- to C-terminus: MKGLEKIIPLDGRDIKVVLQKFAPQAAGSILISSGETAVLVTANRAAAREGIDFLPLVVDYEERLYAAGRIPGGFLRREGRPPEKAILIGRLIDRPLRPLFPQWLRDDLQVVATTVSLDENAPPDVLAVTGASIAVLLAQIPFNGPMAAVRVGLVGDEFVINPTYKEIERGGLDLVVAGSPDGVVMVEAGANELPEADMIEAIDFAYEVIRDLIQAQRDLLKELGIDIVRAEPPAIDPTLENFIYDRAAEPVKAILKRFEKDKNVRDAALDEVQGAIAQEIAALPEDDPVAVAAAENPKALPTLFKAVTKKLMRQQIIEEGVRVDGRRLDEVRPIWCEVGVLPERVHGSALFNRGLTQVMSVTTLGSPADAQALDDLHPEDSKRYLHHYNFPPYSVGEVKPLRSPGRREIGHGALAERALEPVLPPKEEFPYVIRVVSEVLSSDGSTSMGSVCGSTLSLMDAGVPIRKPVSGAAMGLIKEGNEVRILTDIQGIEDFLGDMDFKVAGTDSGITALQMDMKITGLPVAVIQQAIEQARPARLHILEKMLAVLDKPRPQLPPSAPRLLTLQIPPDMIGLVIGPGGKTVRGISEQYNVKVDISEEGLVTITAPNETNAKQARAAIEGLTRKLNAGDVYLGRVTRIIPIGAFVELLPGKEGMIHISQLAEYRVGKVEDEVKIGDEIVVKIREVDSKGRINLTRLGIHPDEAEAARSNSVV.

2 residues coordinate Mg(2+): Asp495 and Asp501. Positions 562–621 (PRLLTLQIPPDMIGLVIGPGGKTVRGISEQYNVKVDISEEGLVTITAPNETNAKQARAAI) constitute a KH domain. Positions 631 to 699 (GDVYLGRVTR…SKGRINLTRL (69 aa)) constitute an S1 motif domain.

It belongs to the polyribonucleotide nucleotidyltransferase family. Mg(2+) is required as a cofactor.

Its subcellular location is the cytoplasm. The catalysed reaction is RNA(n+1) + phosphate = RNA(n) + a ribonucleoside 5'-diphosphate. Involved in mRNA degradation. Catalyzes the phosphorolysis of single-stranded polyribonucleotides processively in the 3'- to 5'-direction. The sequence is that of Polyribonucleotide nucleotidyltransferase from Thermosynechococcus vestitus (strain NIES-2133 / IAM M-273 / BP-1).